Here is a 278-residue protein sequence, read N- to C-terminus: UPF0758 protein BURPS1106A_0984 (278 aa).

The disordered stretch occupies residues 1-64 (MQYEIVSAGE…ATAAARRGRD (64 aa)). The segment covering 22–59 (AAAPAAPSSAVPSSAALSSAALSSAAQPTGAPPATAAA) has biased composition (low complexity). Residues 156–278 (LVDSPGAVDD…TFSFAQAGWI (123 aa)) enclose the MPN domain. Zn(2+) is bound by residues histidine 227, histidine 229, and aspartate 240. The short motif at 227–240 (HNHPSGAVRPSAAD) is the JAMM motif element.

Belongs to the UPF0758 family.

The chain is UPF0758 protein BURPS1106A_0984 from Burkholderia pseudomallei (strain 1106a).